Here is a 233-residue protein sequence, read N- to C-terminus: 7-cyano-7-deazaguanine synthase (233 aa).

7–17 (LSGGLDSAVTS) provides a ligand contact to ATP. Zn(2+) contacts are provided by Cys-195, Cys-206, Cys-209, and Cys-212.

It belongs to the QueC family. Zn(2+) is required as a cofactor.

It carries out the reaction 7-carboxy-7-deazaguanine + NH4(+) + ATP = 7-cyano-7-deazaguanine + ADP + phosphate + H2O + H(+). Its pathway is purine metabolism; 7-cyano-7-deazaguanine biosynthesis. Functionally, catalyzes the ATP-dependent conversion of 7-carboxy-7-deazaguanine (CDG) to 7-cyano-7-deazaguanine (preQ(0)). This Methanococcus maripaludis (strain C6 / ATCC BAA-1332) protein is 7-cyano-7-deazaguanine synthase.